We begin with the raw amino-acid sequence, 130 residues long: MQAPWAGNRGWAGTREEVRDMSEHVTRSQSSERGNDQESSQPVGPVIVQQPTEEKRQEEEPPTDNQGIAPSGEIKNEGAPAVQGTDVEAFQQELALLKIEDAPGDGPDVREGTLPTFDPTKVLEAGEGQL.

Disordered regions lie at residues 1–88 and 101–130; these read MQAP…TDVE and DAPG…EGQL. Residues 14 to 26 show a composition bias toward basic and acidic residues; sequence TREEVRDMSEHVT. Residues 27-42 are compositionally biased toward polar residues; sequence RSQSSERGNDQESSQP. Thr-113 and Thr-116 each carry phosphothreonine.

It belongs to the GAGE family.

The protein is P antigen family member 5 (PAGE5) of Homo sapiens (Human).